We begin with the raw amino-acid sequence, 693 residues long: Glycine--tRNA ligase beta subunit (693 aa).

Residues 65–74 (QPDKSVEKRG) show a composition bias toward basic and acidic residues. A disordered region spans residues 65–84 (QPDKSVEKRGPAVKAAFDDS).

The protein belongs to the class-II aminoacyl-tRNA synthetase family. As to quaternary structure, tetramer of two alpha and two beta subunits.

It localises to the cytoplasm. The catalysed reaction is tRNA(Gly) + glycine + ATP = glycyl-tRNA(Gly) + AMP + diphosphate. The polypeptide is Glycine--tRNA ligase beta subunit (Marinobacter nauticus (strain ATCC 700491 / DSM 11845 / VT8) (Marinobacter aquaeolei)).